We begin with the raw amino-acid sequence, 428 residues long: GTPase Obg (428 aa).

One can recognise an Obg domain in the interval 1 to 158 (MFVDQVKVYV…RDVILELKVL (158 aa)). The disordered stretch occupies residues 118–145 (KGGRGGRGNSRFATPANPAPQLSENGEP). The OBG-type G domain maps to 159-329 (ADVGLVGFPS…LLFEIANQLE (171 aa)). Residues 165-172 (GFPSVGKS), 190-194 (FTTLV), 212-215 (DLPG), 282-285 (NKMD), and 310-312 (SAI) contribute to the GTP site. Mg(2+)-binding residues include serine 172 and threonine 192. The OCT domain occupies 350–428 (RFDEGDAPFE…LLEFEFEFID (79 aa)).

Belongs to the TRAFAC class OBG-HflX-like GTPase superfamily. OBG GTPase family. In terms of assembly, monomer. It depends on Mg(2+) as a cofactor.

It localises to the cytoplasm. Its function is as follows. An essential GTPase which binds GTP, GDP and possibly (p)ppGpp with moderate affinity, with high nucleotide exchange rates and a fairly low GTP hydrolysis rate. Plays a role in control of the cell cycle, stress response, ribosome biogenesis and in those bacteria that undergo differentiation, in morphogenesis control. The sequence is that of GTPase Obg from Bacillus pumilus (strain SAFR-032).